Reading from the N-terminus, the 383-residue chain is Succinyl-diaminopimelate desuccinylase (383 aa).

Residue histidine 73 participates in Zn(2+) binding. The active site involves aspartate 75. Position 107 (aspartate 107) interacts with Zn(2+). Glutamate 141 serves as the catalytic Proton acceptor. Glutamate 142, glutamate 170, and histidine 356 together coordinate Zn(2+).

It belongs to the peptidase M20A family. DapE subfamily. As to quaternary structure, homodimer. The cofactor is Zn(2+). Co(2+) serves as cofactor.

The catalysed reaction is N-succinyl-(2S,6S)-2,6-diaminopimelate + H2O = (2S,6S)-2,6-diaminopimelate + succinate. It participates in amino-acid biosynthesis; L-lysine biosynthesis via DAP pathway; LL-2,6-diaminopimelate from (S)-tetrahydrodipicolinate (succinylase route): step 3/3. Catalyzes the hydrolysis of N-succinyl-L,L-diaminopimelic acid (SDAP), forming succinate and LL-2,6-diaminopimelate (DAP), an intermediate involved in the bacterial biosynthesis of lysine and meso-diaminopimelic acid, an essential component of bacterial cell walls. The polypeptide is Succinyl-diaminopimelate desuccinylase (Pseudomonas paraeruginosa (strain DSM 24068 / PA7) (Pseudomonas aeruginosa (strain PA7))).